The chain runs to 444 residues: Trigger factor (444 aa).

The PPIase FKBP-type domain occupies 160–245; sequence DMQVTFDFEG…VKQVEKPKLP (86 aa).

This sequence belongs to the FKBP-type PPIase family. Tig subfamily.

It is found in the cytoplasm. The enzyme catalyses [protein]-peptidylproline (omega=180) = [protein]-peptidylproline (omega=0). Its function is as follows. Involved in protein export. Acts as a chaperone by maintaining the newly synthesized protein in an open conformation. Functions as a peptidyl-prolyl cis-trans isomerase. This is Trigger factor from Acinetobacter baumannii (strain SDF).